The chain runs to 679 residues: Patatin-like phospholipase 1 (679 aa).

Disordered stretches follow at residues 19-45 (FSDD…NAEN) and 155-194 (GEYE…NYNS). Polar residues-rich tracts occupy residues 35–45 (YSGSETQNAEN) and 162–176 (TSSY…NTVG). Basic and acidic residues predominate over residues 177–188 (SEKEETENKNEE). The 207-residue stretch at 338-544 (LSLDGGGILT…KASNPALIAL (207 aa)) folds into the PNPLA domain. The GXSXG motif lies at 381-385 (GTSAG). The active-site Nucleophile is Ser383. Asp531 serves as the catalytic Proton acceptor. Residues 531 to 533 (DGA) carry the DGA/G motif.

The protein belongs to the patatin family.

The protein resides in the cytoplasm. It carries out the reaction a 1,2-diacyl-sn-glycero-3-phosphocholine + H2O = a 1-acyl-sn-glycero-3-phosphocholine + a fatty acid + H(+). The catalysed reaction is 1,2-dihexadecanoyl-sn-glycero-3-phosphocholine + H2O = 1-hexadecanoyl-sn-glycero-3-phosphocholine + hexadecanoate + H(+). Functionally, hydrolyzes the ester bond of the fatty acyl group attached at the sn-2 position of phospholipids such as phosphatidylcholine. Involved in gametogenesis; however, it is not clear whether it is involved in gametocytes development in host erythrocytes or in gametocyte activation in the mosquito midgut. Involved in gametocyte development in host erythrocytes; however, not involved in gametocytes activation including male gamete exflagellation. Involved in the rounding up of gametocytes following activation in the mosquito midgut; however, not required for gametocyte development in host erythrocytes. Required for exflagellation of activated male gametocytes. Involved in gametocytes egress from host erythrocytes by promoting the relocalization of perforin-like protein PLP2-containing vesicles to the periphery of gametocytes; PLP2 secretion is required for permeabilization of the erythrocyte membrane and thus, promotes gametocyte egress. Dispensable for asexual blood stage development. In Plasmodium falciparum (isolate NF54), this protein is Patatin-like phospholipase 1.